Reading from the N-terminus, the 428-residue chain is AP-1 complex subunit mu-2 (428 aa).

The 257-residue stretch at 170-426 (KNEVFLDVIE…ITMAGEYELR (257 aa)) folds into the MHD domain.

It belongs to the adaptor complexes medium subunit family. In terms of assembly, adaptor protein complex 1 (AP-1) is a heterotetramer composed of two large adaptins (gamma-type subunit and beta-type subunit), a medium adaptin (mu-type subunit) and a small adaptin (sigma-type subunit). In terms of tissue distribution, ubiquitous.

It is found in the golgi apparatus. It localises to the trans-Golgi network membrane. The protein resides in the early endosome membrane. The protein localises to the cytoplasmic vesicle. Its subcellular location is the clathrin-coated vesicle membrane. In terms of biological role, subunit of clathrin-associated adaptor protein complex 1 that plays a role in protein sorting at the trans-Golgi network and early endosomes (TGN/EE). The AP complexes mediate the recruitment of clathrin to membranes and the recognition of sorting signals within the cytosolic tails of transmembrane cargo molecules. Required for KNOLLE localization at the cell plate to mediate cytokinesis. Functions redundantly with AP1M1 in multiple post-Golgi trafficking pathways leading from the TGN to the vacuole, the plasma membrane, and the cell-division plane. The chain is AP-1 complex subunit mu-2 (AP1M2) from Arabidopsis thaliana (Mouse-ear cress).